Here is a 93-residue protein sequence, read N- to C-terminus: Pyrimidine/purine nucleoside phosphorylase (93 aa).

The protein belongs to the nucleoside phosphorylase PpnP family.

The enzyme catalyses a purine D-ribonucleoside + phosphate = a purine nucleobase + alpha-D-ribose 1-phosphate. It carries out the reaction adenosine + phosphate = alpha-D-ribose 1-phosphate + adenine. It catalyses the reaction cytidine + phosphate = cytosine + alpha-D-ribose 1-phosphate. The catalysed reaction is guanosine + phosphate = alpha-D-ribose 1-phosphate + guanine. The enzyme catalyses inosine + phosphate = alpha-D-ribose 1-phosphate + hypoxanthine. It carries out the reaction thymidine + phosphate = 2-deoxy-alpha-D-ribose 1-phosphate + thymine. It catalyses the reaction uridine + phosphate = alpha-D-ribose 1-phosphate + uracil. The catalysed reaction is xanthosine + phosphate = alpha-D-ribose 1-phosphate + xanthine. In terms of biological role, catalyzes the phosphorolysis of diverse nucleosides, yielding D-ribose 1-phosphate and the respective free bases. Can use uridine, adenosine, guanosine, cytidine, thymidine, inosine and xanthosine as substrates. Also catalyzes the reverse reactions. This chain is Pyrimidine/purine nucleoside phosphorylase, found in Cellvibrio japonicus (strain Ueda107) (Pseudomonas fluorescens subsp. cellulosa).